Here is a 373-residue protein sequence, read N- to C-terminus: ATP-dependent 6-phosphofructokinase (373 aa).

Residues G12, 74 to 75, and 110 to 113 each bind ATP; these read RD and GGGT. Residues 133-135, R170, 177-179, E230, R291, and 297-300 contribute to the substrate site; these read TID, MGH, and YVQR. Residue D135 is the Proton acceptor of the active site.

Belongs to the phosphofructokinase type A (PFKA) family. Mixed-substrate PFK group III subfamily. In terms of assembly, homodimer or homotetramer. It depends on Mg(2+) as a cofactor.

It is found in the cytoplasm. The catalysed reaction is beta-D-fructose 6-phosphate + ATP = beta-D-fructose 1,6-bisphosphate + ADP + H(+). It participates in carbohydrate degradation; glycolysis; D-glyceraldehyde 3-phosphate and glycerone phosphate from D-glucose: step 3/4. Functionally, catalyzes the phosphorylation of D-fructose 6-phosphate to fructose 1,6-bisphosphate by ATP, the first committing step of glycolysis. This chain is ATP-dependent 6-phosphofructokinase, found in Propionibacterium freudenreichii subsp. shermanii (strain ATCC 9614 / DSM 4902 / CIP 103027 / NCIMB 8099 / CIRM-BIA1).